The following is a 684-amino-acid chain: Methionine--tRNA ligase (684 aa).

The short motif at 12–22 (PYANGSIHLGH) is the 'HIGH' region element. Zn(2+)-binding residues include C143, C146, C156, and C159. The short motif at 339–343 (KMSKS) is the 'KMSKS' region element. K342 serves as a coordination point for ATP. In terms of domain architecture, tRNA-binding spans 581-684 (DFMKIDMRVA…AGAQPGDKVG (104 aa)).

Belongs to the class-I aminoacyl-tRNA synthetase family. MetG type 1 subfamily. As to quaternary structure, homodimer. Zn(2+) is required as a cofactor.

It is found in the cytoplasm. The enzyme catalyses tRNA(Met) + L-methionine + ATP = L-methionyl-tRNA(Met) + AMP + diphosphate. In terms of biological role, is required not only for elongation of protein synthesis but also for the initiation of all mRNA translation through initiator tRNA(fMet) aminoacylation. The sequence is that of Methionine--tRNA ligase from Neisseria gonorrhoeae (strain ATCC 700825 / FA 1090).